The following is a 197-amino-acid chain: dITP/XTP pyrophosphatase (197 aa).

Residue 8-13 (TGNPGK) participates in substrate binding. Residues Glu-40 and Asp-69 each coordinate Mg(2+). Asp-69 serves as the catalytic Proton acceptor. Residues Ser-70, 154–157 (FGYD), Lys-177, and 182–183 (HR) each bind substrate.

This sequence belongs to the HAM1 NTPase family. In terms of assembly, homodimer. Mg(2+) serves as cofactor.

It carries out the reaction XTP + H2O = XMP + diphosphate + H(+). The enzyme catalyses dITP + H2O = dIMP + diphosphate + H(+). The catalysed reaction is ITP + H2O = IMP + diphosphate + H(+). In terms of biological role, pyrophosphatase that catalyzes the hydrolysis of nucleoside triphosphates to their monophosphate derivatives, with a high preference for the non-canonical purine nucleotides XTP (xanthosine triphosphate), dITP (deoxyinosine triphosphate) and ITP. Seems to function as a house-cleaning enzyme that removes non-canonical purine nucleotides from the nucleotide pool, thus preventing their incorporation into DNA/RNA and avoiding chromosomal lesions. This is dITP/XTP pyrophosphatase from Photorhabdus laumondii subsp. laumondii (strain DSM 15139 / CIP 105565 / TT01) (Photorhabdus luminescens subsp. laumondii).